A 252-amino-acid polypeptide reads, in one-letter code: Ubiquinone biosynthesis protein COQ4 homolog 1, mitochondrial (252 aa).

Histidine 130, aspartate 131, histidine 134, and glutamate 146 together coordinate Zn(2+).

The protein belongs to the COQ4 family. In terms of assembly, component of a multi-subunit COQ enzyme complex. Zn(2+) serves as cofactor.

It is found in the mitochondrion inner membrane. The enzyme catalyses a 4-hydroxy-3-methoxy-5-(all-trans-polyprenyl)benzoate + H(+) = a 2-methoxy-6-(all-trans-polyprenyl)phenol + CO2. It participates in cofactor biosynthesis; ubiquinone biosynthesis. In terms of biological role, lyase that catalyzes the C1-decarboxylation of 4-hydroxy-3-methoxy-5-(all-trans-polyprenyl)benzoic acid into 2-methoxy-6-(all-trans-polyprenyl)phenol during ubiquinone biosynthesis. The protein is Ubiquinone biosynthesis protein COQ4 homolog 1, mitochondrial of Trypanosoma cruzi (strain CL Brener).